A 240-amino-acid chain; its full sequence is Poxin (240 aa).

The active-site Proton donor is the His46. Catalysis depends on Tyr181, which acts as the Shared with catalytic histidine of dimeric partner. Lys185 functions as the Proton acceptor; shared with catalytic histidine of dimeric partner in the catalytic mechanism.

Belongs to the poxin family. Homodimer.

The catalysed reaction is 2',3'-cGAMP + H2O = Gp(2'-5')Ap(3') + H(+). Functionally, nuclease that cleaves host 2',3'-cGAMP. The chain is Poxin (P26) from Lepidoptera (butterflies and moths).